The sequence spans 151 residues: Large ribosomal subunit protein bL9 (151 aa).

Belongs to the bacterial ribosomal protein bL9 family.

Its function is as follows. Binds to the 23S rRNA. In Bordetella avium (strain 197N), this protein is Large ribosomal subunit protein bL9.